Here is a 191-residue protein sequence, read N- to C-terminus: Ureidoglycolate lyase (191 aa).

It belongs to the ureidoglycolate lyase family. Homodimer.

It carries out the reaction (S)-ureidoglycolate = urea + glyoxylate. The protein operates within nitrogen metabolism; (S)-allantoin degradation. Its function is as follows. Catalyzes the catabolism of the allantoin degradation intermediate (S)-ureidoglycolate, generating urea and glyoxylate. Involved in the utilization of allantoin as secondary nitrogen source when primary sources are limiting. This chain is Ureidoglycolate lyase, found in Schizosaccharomyces pombe (strain 972 / ATCC 24843) (Fission yeast).